The primary structure comprises 775 residues: Ribonucleoside-diphosphate reductase large subunit (775 aa).

Substrate-binding positions include T200, 215–216, G246, 427–431, and 606–610; these read SC, NLCTE, and PTVSS. Cysteines 216 and 444 form a disulfide. The Proton acceptor role is filled by N427. The active-site Cysteine radical intermediate is C429. Residue E431 is the Proton acceptor of the active site.

This sequence belongs to the ribonucleoside diphosphate reductase large chain family. In terms of assembly, heterotetramer composed of a homodimer of the large subunit (R1) and a homodimer of the small subunit (R2). Larger multisubunit protein complex are also active, composed of (R1)n(R2)n.

The catalysed reaction is a 2'-deoxyribonucleoside 5'-diphosphate + [thioredoxin]-disulfide + H2O = a ribonucleoside 5'-diphosphate + [thioredoxin]-dithiol. In terms of biological role, ribonucleoside-diphosphate reductase holoenzyme provides the precursors necessary for viral DNA synthesis. Allows virus growth in non-dividing cells, as well as reactivation from latency in infected hosts. Catalyzes the biosynthesis of deoxyribonucleotides from the corresponding ribonucleotides. The polypeptide is Ribonucleoside-diphosphate reductase large subunit (Homo sapiens (Human)).